Consider the following 727-residue polypeptide: Beta-galactosidase 2 (727 aa).

Residues 1 to 27 (MSMHFRNKAWIILAILCFSSLIHSTEA) form the signal peptide. The active-site Proton donor is the Glu-185. Glu-254 functions as the Nucleophile in the catalytic mechanism. Asn-255 carries an N-linked (GlcNAc...) asparagine glycan.

Belongs to the glycosyl hydrolase 35 family. In terms of tissue distribution, ubiquitous, with higher expression levels in roots and siliques.

The protein localises to the secreted. It is found in the extracellular space. Its subcellular location is the apoplast. The enzyme catalyses Hydrolysis of terminal non-reducing beta-D-galactose residues in beta-D-galactosides.. This is Beta-galactosidase 2 (BGAL2) from Arabidopsis thaliana (Mouse-ear cress).